The following is a 152-amino-acid chain: MAGKIFAVRVTHGQEETTAKLIYSKVRTYNLPIYAILAPSRVKGYIFVEAPNKGVVDEAIRGIRHARGVLPGEVPFKEIEHFLEEKPAVSGLEPGDLVEVIAGPFKGQKAKVVKIDESKDEVVVQFIDAIVPIPVTIKGDYVRLISKLQKEE.

Residues 94 to 124 form the KOW domain; sequence PGDLVEVIAGPFKGQKAKVVKIDESKDEVVV.

This sequence belongs to the archaeal Spt5 family. Heterodimer composed of Spt4 and Spt5. Interacts with RNA polymerase (RNAP) independently of nucleic acids. Forms a homodimer in solution.

Functionally, stimulates transcription elongation. This is Transcription elongation factor Spt5 from Pyrococcus furiosus (strain ATCC 43587 / DSM 3638 / JCM 8422 / Vc1).